A 286-amino-acid chain; its full sequence is Lipoyl synthase (286 aa).

[4Fe-4S] cluster is bound by residues C29, C34, C40, C55, C59, C62, and S265. The 214-residue stretch at W41 to S254 folds into the Radical SAM core domain.

The protein belongs to the radical SAM superfamily. Lipoyl synthase family. It depends on [4Fe-4S] cluster as a cofactor.

It localises to the cytoplasm. The enzyme catalyses [[Fe-S] cluster scaffold protein carrying a second [4Fe-4S](2+) cluster] + N(6)-octanoyl-L-lysyl-[protein] + 2 oxidized [2Fe-2S]-[ferredoxin] + 2 S-adenosyl-L-methionine + 4 H(+) = [[Fe-S] cluster scaffold protein] + N(6)-[(R)-dihydrolipoyl]-L-lysyl-[protein] + 4 Fe(3+) + 2 hydrogen sulfide + 2 5'-deoxyadenosine + 2 L-methionine + 2 reduced [2Fe-2S]-[ferredoxin]. It participates in protein modification; protein lipoylation via endogenous pathway; protein N(6)-(lipoyl)lysine from octanoyl-[acyl-carrier-protein]: step 2/2. In terms of biological role, catalyzes the radical-mediated insertion of two sulfur atoms into the C-6 and C-8 positions of the octanoyl moiety bound to the lipoyl domains of lipoate-dependent enzymes, thereby converting the octanoylated domains into lipoylated derivatives. The sequence is that of Lipoyl synthase from Sulfolobus acidocaldarius (strain ATCC 33909 / DSM 639 / JCM 8929 / NBRC 15157 / NCIMB 11770).